The primary structure comprises 397 residues: Protein Brevis radix-like 1 (397 aa).

Disordered regions lie at residues 14–37 and 105–148; these read GAPP…AGEC and RAGS…EDDE. The segment covering 124-148 has biased composition (acidic residues); sequence AGDEEEEEEEEEEEGTTADGSEDDE. Residues 150–205 enclose the BRX 1 domain; it reads KEWVAQVEPGVLITFLSLPEGGNDLKRIRFSREIFNKWQAQRWWAENYEKVMELYN. Disordered stretches follow at residues 212-278 and 300-342; these read QTPL…QQHH and SISG…DQER. Basic and acidic residues predominate over residues 220-230; that stretch reads KSEDESLKEDI. The segment covering 309 to 320 has biased composition (low complexity); the sequence is SSMDASMRSSSS. Positions 342-397 constitute a BRX 2 domain; it reads REWVEEDEPGVYITIRALPGGIRELRRVRFSREKFSEMHARLWWEENRARIHDQYL.

The protein belongs to the BRX family.

Its subcellular location is the nucleus. The chain is Protein Brevis radix-like 1 (BRXL1) from Oryza sativa subsp. japonica (Rice).